The following is a 794-amino-acid chain: ALG-2 interacting protein X (794 aa).

A BRO1 domain is found at 1–385; it reads MLSIERKRTE…DNIEFHNQSA (385 aa). 2 coiled-coil regions span residues 499–568 and 600–655; these read SFIR…LCKK and LNES…NLDE. Residues 695-794 are disordered; it reads GVNPHSPLTS…PPYNSNNKHY (100 aa). Positions 698–712 are enriched in low complexity; that stretch reads PHSPLTSPSPSLQSP. Polar residues predominate over residues 713–722; sequence VNNYPNQFSS. Composition is skewed to low complexity over residues 723-742 and 749-764; these read PQYH…YVPS and YSYN…QFGG. The span at 765–787 shows a compositional bias: pro residues; it reads PLPPPQSFSAPPPPQSFTAPPPY.

In terms of assembly, self-associates; the interaction is calcium-independent Interacts with pefa; the interaction is calcium-dependent. Interacts with pefb; the interaction is calcium-dependent.

It localises to the cytoplasm. The protein resides in the cytoplasmic vesicle membrane. The protein localises to the endosome. Unknown. Required for development but not for cell death. The polypeptide is ALG-2 interacting protein X (alxA) (Dictyostelium discoideum (Social amoeba)).